Reading from the N-terminus, the 298-residue chain is Cyanophycinase (298 aa).

Catalysis depends on charge relay system residues S155, E173, and H197.

Belongs to the peptidase S51 family.

It carries out the reaction [L-4-(L-arginin-2-N-yl)aspartate](n) + H2O = [L-4-(L-arginin-2-N-yl)aspartate](n-1) + L-4-(L-arginin-2-N-yl)aspartate. Its function is as follows. Exopeptidase that catalyzes the hydrolytic cleavage of multi-L-arginyl-poly-L-aspartic acid (cyanophycin; a water-insoluble reserve polymer) into aspartate-arginine dipeptides. The polypeptide is Cyanophycinase (cphB) (Trichormus variabilis (strain ATCC 29413 / PCC 7937) (Anabaena variabilis)).